The primary structure comprises 624 residues: tRNA uridine 5-carboxymethylaminomethyl modification enzyme MnmG (624 aa).

FAD contacts are provided by residues 13–18 (GGGHAG), Val125, and Ser180. 273–287 (GPRYCPSIEDKIVRF) provides a ligand contact to NAD(+). Residue Gln370 coordinates FAD.

The protein belongs to the MnmG family. As to quaternary structure, homodimer. Heterotetramer of two MnmE and two MnmG subunits. The cofactor is FAD.

It is found in the cytoplasm. NAD-binding protein involved in the addition of a carboxymethylaminomethyl (cmnm) group at the wobble position (U34) of certain tRNAs, forming tRNA-cmnm(5)s(2)U34. The sequence is that of tRNA uridine 5-carboxymethylaminomethyl modification enzyme MnmG from Legionella pneumophila subsp. pneumophila (strain Philadelphia 1 / ATCC 33152 / DSM 7513).